A 449-amino-acid chain; its full sequence is Chromosomal replication initiator protein DnaA (449 aa).

Positions methionine 1–isoleucine 71 are domain I, interacts with DnaA modulators. The segment at isoleucine 71–serine 112 is domain II. A domain III, AAA+ region region spans residues arginine 113–serine 329. 4 residues coordinate ATP: glycine 157, glycine 159, lysine 160, and threonine 161. Residues arginine 330–threonine 449 are domain IV, binds dsDNA.

This sequence belongs to the DnaA family. In terms of assembly, oligomerizes as a right-handed, spiral filament on DNA at oriC.

The protein resides in the cytoplasm. Its function is as follows. Plays an essential role in the initiation and regulation of chromosomal replication. ATP-DnaA binds to the origin of replication (oriC) to initiate formation of the DNA replication initiation complex once per cell cycle. Binds the DnaA box (a 9 base pair repeat at the origin) and separates the double-stranded (ds)DNA. Forms a right-handed helical filament on oriC DNA; dsDNA binds to the exterior of the filament while single-stranded (ss)DNA is stabiized in the filament's interior. The ATP-DnaA-oriC complex binds and stabilizes one strand of the AT-rich DNA unwinding element (DUE), permitting loading of DNA polymerase. After initiation quickly degrades to an ADP-DnaA complex that is not apt for DNA replication. Binds acidic phospholipids. This Nitrosococcus oceani (strain ATCC 19707 / BCRC 17464 / JCM 30415 / NCIMB 11848 / C-107) protein is Chromosomal replication initiator protein DnaA.